A 491-amino-acid polypeptide reads, in one-letter code: Probable cobyric acid synthase (491 aa).

The 193-residue stretch at 252–444 (PVEVNIVKFS…LHGILENFEF (193 aa)) folds into the GATase cobBQ-type domain. Cysteine 330 (nucleophile) is an active-site residue. The active site involves histidine 436.

This sequence belongs to the CobB/CobQ family. CobQ subfamily.

It participates in cofactor biosynthesis; adenosylcobalamin biosynthesis. Functionally, catalyzes amidations at positions B, D, E, and G on adenosylcobyrinic A,C-diamide. NH(2) groups are provided by glutamine, and one molecule of ATP is hydrogenolyzed for each amidation. The sequence is that of Probable cobyric acid synthase from Methanococcus vannielii (strain ATCC 35089 / DSM 1224 / JCM 13029 / OCM 148 / SB).